A 218-amino-acid polypeptide reads, in one-letter code: Keratin-associated protein 10-8 (218 aa).

Residues 26–202 (CGNQVSSPSA…FCQPSCCHPA (177 aa)) form a 16 X 5 AA repeats of C-C-X(3) region. Tandem repeats lie at residues 50 to 54 (CCEPT), 55 to 59 (CCAPS), 60 to 64 (CCAPA), 86 to 90 (CSSSS), 96 to 100 (CCVPV), 101 to 105 (CCRPV), 111 to 115 (CCRPV), 121 to 125 (CCTPV), 131 to 135 (CCRPV), 136 to 140 (CCRPV), 141 to 145 (CCRPV), 151 to 155 (CCRPM), 161 to 167 (PCSAPSS), 168 to 172 (CCRPS), 187 to 191 (CCVPT), and 198 to 202 (CCHPA).

The protein belongs to the KRTAP type 10 family. In terms of assembly, interacts with hair keratins.

In terms of biological role, in the hair cortex, hair keratin intermediate filaments are embedded in an interfilamentous matrix, consisting of hair keratin-associated proteins (KRTAP), which are essential for the formation of a rigid and resistant hair shaft through their extensive disulfide bond cross-linking with abundant cysteine residues of hair keratins. The matrix proteins include the high-sulfur and high-glycine-tyrosine keratins. The sequence is that of Keratin-associated protein 10-8 from Bos taurus (Bovine).